The chain runs to 235 residues: Uridylate kinase (235 aa).

9–12 lines the ATP pocket; that stretch reads KLSG. The interval 17–22 is involved in allosteric activation by GTP; sequence GNQGYG. G51 lines the UMP pocket. 2 residues coordinate ATP: G52 and R56. Residues D71 and 132–139 contribute to the UMP site; that span reads CGNPFFTT. ATP contacts are provided by T159, Y165, and D168.

This sequence belongs to the UMP kinase family. Homohexamer.

The protein localises to the cytoplasm. The enzyme catalyses UMP + ATP = UDP + ADP. Its pathway is pyrimidine metabolism; CTP biosynthesis via de novo pathway; UDP from UMP (UMPK route): step 1/1. Allosterically activated by GTP. Inhibited by UTP. Functionally, catalyzes the reversible phosphorylation of UMP to UDP. The polypeptide is Uridylate kinase (Synechococcus sp. (strain CC9311)).